The sequence spans 250 residues: 4-hydroxy-tetrahydrodipicolinate reductase (250 aa).

NAD(+) is bound by residues 10-15 (GAKGRI), 78-80 (GTT), and 105-108 (APNF). Histidine 135 (proton donor/acceptor) is an active-site residue. Histidine 136 is a binding site for (S)-2,3,4,5-tetrahydrodipicolinate. Lysine 139 functions as the Proton donor in the catalytic mechanism. 145 to 146 (GT) contacts (S)-2,3,4,5-tetrahydrodipicolinate.

This sequence belongs to the DapB family.

Its subcellular location is the cytoplasm. It catalyses the reaction (S)-2,3,4,5-tetrahydrodipicolinate + NAD(+) + H2O = (2S,4S)-4-hydroxy-2,3,4,5-tetrahydrodipicolinate + NADH + H(+). The enzyme catalyses (S)-2,3,4,5-tetrahydrodipicolinate + NADP(+) + H2O = (2S,4S)-4-hydroxy-2,3,4,5-tetrahydrodipicolinate + NADPH + H(+). It participates in amino-acid biosynthesis; L-lysine biosynthesis via DAP pathway; (S)-tetrahydrodipicolinate from L-aspartate: step 4/4. Functionally, catalyzes the conversion of 4-hydroxy-tetrahydrodipicolinate (HTPA) to tetrahydrodipicolinate. This chain is 4-hydroxy-tetrahydrodipicolinate reductase, found in Streptomyces coelicolor (strain ATCC BAA-471 / A3(2) / M145).